A 311-amino-acid chain; its full sequence is Malate dehydrogenase (311 aa).

NAD(+) contacts are provided by residues 7–13 and D34; that span reads GAAGGIG. Substrate is bound by residues R81 and R87. NAD(+) contacts are provided by residues N94 and 117 to 119; that span reads ITN. N119 and R153 together coordinate substrate. H177 functions as the Proton acceptor in the catalytic mechanism. M227 lines the NAD(+) pocket.

This sequence belongs to the LDH/MDH superfamily. MDH type 1 family. In terms of assembly, homodimer.

The catalysed reaction is (S)-malate + NAD(+) = oxaloacetate + NADH + H(+). Its function is as follows. Catalyzes the reversible oxidation of malate to oxaloacetate. The chain is Malate dehydrogenase from Vibrio campbellii (strain ATCC BAA-1116).